Reading from the N-terminus, the 132-residue chain is Large ribosomal subunit protein uL14 (132 aa).

The protein belongs to the universal ribosomal protein uL14 family. As to quaternary structure, part of the 50S ribosomal subunit. Forms a cluster with proteins L3 and L24e, part of which may contact the 16S rRNA in 2 intersubunit bridges.

Functionally, binds to 23S rRNA. Forms part of two intersubunit bridges in the 70S ribosome. This is Large ribosomal subunit protein uL14 from Methanocella arvoryzae (strain DSM 22066 / NBRC 105507 / MRE50).